The chain runs to 491 residues: Equilibrative nucleobase transporter 1 (491 aa).

A helical membrane pass occupies residues 17–37 (LLECLGFAGVLFGWPSLVFVF). N-linked (GlcNAc...) asparagine glycosylation occurs at asparagine 56. 5 helical membrane-spanning segments follow: residues 72 to 92 (LIFT…GYIF), 102 to 122 (LIAI…SAGS), 123 to 143 (AVLL…FLIT), 156 to 176 (STII…FLII), and 188 to 208 (ASFI…FLLM). Residues asparagine 220 and asparagine 229 are each glycosylated (N-linked (GlcNAc...) asparagine). A Phosphoserine modification is found at serine 253. Position 258 is a phosphothreonine (threonine 258). 6 helical membrane passes run 279 to 299 (FAWH…FIGT), 319 to 339 (TNAF…GLLM), 356 to 376 (STLA…SLLC), 396 to 418 (ILQV…LAFP), 427 to 447 (GLVM…FTLI), and 456 to 476 (FYVN…PFLV).

The protein belongs to the SLC43A transporter (TC 2.A.1.44) family. In terms of tissue distribution, widely expressed with highest levels in the liver and lung, followed by the pancreas. Highly expressed in macrophages.

The protein localises to the basolateral cell membrane. The catalysed reaction is adenine(out) = adenine(in). It catalyses the reaction guanine(out) = guanine(in). It carries out the reaction hypoxanthine(out) = hypoxanthine(in). Its activity is regulated as follows. Adenine transport is strongly inhibited by decynium-22. With respect to regulation, 6-mercaptopurine-transport is inhibited by 6-thioguanine, 6-methylmercaptopurine and decynium-22. Sodium-independent purine-selective nucleobase transporter which mediates the equilibrative transport of extracellular purine nucleobases such as adenine, guanine and hypoxanthine. May regulate fatty acid (FA) transport in adipocytes, acting as a positive regulator of FA efflux and as a negative regulator of FA uptake. Functionally, sodium-independent purine-selective nucleobase transporter which mediates the equilibrative transport of extracellular purine nucleobase adenine. Mediates the influx and efflux of the purine nucleobase analog drug 6-mercaptopurine across the membrane. The protein is Equilibrative nucleobase transporter 1 (SLC43A3) of Homo sapiens (Human).